Here is an 860-residue protein sequence, read N- to C-terminus: Probable inorganic carbon transporter subunit DabA (860 aa).

The interval 1–32 is disordered; sequence MTTTSLGADAAHTHAMVPSAIPPEGSDAAGPD. Zn(2+) is bound by residues Cys-369, Asp-371, His-551, and Cys-566.

Belongs to the inorganic carbon transporter (TC 9.A.2) DabA family. In terms of assembly, forms a complex with DabB. Zn(2+) serves as cofactor.

It is found in the cell inner membrane. Its function is as follows. Part of an energy-coupled inorganic carbon pump. This chain is Probable inorganic carbon transporter subunit DabA, found in Ralstonia pickettii (strain 12D).